The chain runs to 281 residues: MPELPPLRDVIAKHGLSASKALGQNFLFDAQLLDRIAGIPGGLENRAVLEIGPGPGGLTRALLKAGARVTAIEMDRRCLPALAELSEVYPGKLSVIHGDAMKLDHAELMGEPFAVVANLPYNVGTALFVRWLGGETWPPQWTSLTLMFQQEVAQRIVSTPGTSAYGRLAVLAQWRSAASMPMKVHRSAFTPPPKVMSAIVHVTPDEMPEGVSARTLERLTEAAFGQRRKMLRQSLKGVPGAVETLAEVAIEETRRAETVTVEEFVALARRLGASRPSSNSG.

6 residues coordinate S-adenosyl-L-methionine: Asn25, Leu27, Gly52, Glu73, Asp99, and Asn118.

It belongs to the class I-like SAM-binding methyltransferase superfamily. rRNA adenine N(6)-methyltransferase family. RsmA subfamily.

The protein resides in the cytoplasm. The catalysed reaction is adenosine(1518)/adenosine(1519) in 16S rRNA + 4 S-adenosyl-L-methionine = N(6)-dimethyladenosine(1518)/N(6)-dimethyladenosine(1519) in 16S rRNA + 4 S-adenosyl-L-homocysteine + 4 H(+). Specifically dimethylates two adjacent adenosines (A1518 and A1519) in the loop of a conserved hairpin near the 3'-end of 16S rRNA in the 30S particle. May play a critical role in biogenesis of 30S subunits. The chain is Ribosomal RNA small subunit methyltransferase A from Erythrobacter litoralis (strain HTCC2594).